The chain runs to 311 residues: MRRAALWLWLCALALRLQPALPQIVAVNVPPEDQDGSGDDSDNFSGSGTGALPDTLSRQTPSTWKDVWLLTATPTAPEPTSSNTETAFTSVLPAGEKPEEGEPVLHVEAEPGFTARDKEKEVTTRPRETVQLPITQRASTVRVTTAQAAVTSHPHGGMQPGLHETSAPTAPGQPDHQPPRVEGGGTSVIKEVVEDGTANQLPAGEGSGEQDFTFETSGENTAVAAVEPGLRNQPPVDEGATGASQSLLDRKEVLGGVIAGGLVGLIFAVCLVAFMLYRMKKKDEGSYSLEEPKQANGGAYQKPTKQEEFYA.

The first 22 residues, 1–22 (MRRAALWLWLCALALRLQPALP), serve as a signal peptide directing secretion. At 23–255 (QIVAVNVPPE…SLLDRKEVLG (233 aa)) the chain is on the extracellular side. Disordered stretches follow at residues 29–59 (VPPEDQDGSGDDSDNFSGSGTGALPDTLSRQ) and 152–184 (SHPHGGMQPGLHETSAPTAPGQPDHQPPRVEGG). A compositionally biased stretch (acidic residues) spans 32–42 (EDQDGSGDDSD). The O-linked (Xyl...) (chondroitin sulfate) serine glycan is linked to Ser37. An N-linked (GlcNAc...) asparagine glycan is attached at Asn43. O-linked (Xyl...) (heparan sulfate) serine glycosylation is found at Ser45 and Ser47. Residues Ser207 and Ser217 are each glycosylated (O-linked (Xyl...) (chondroitin sulfate) serine). The helical transmembrane segment at 256–276 (GVIAGGLVGLIFAVCLVAFML) threads the bilayer. The Cytoplasmic segment spans residues 277-311 (YRMKKKDEGSYSLEEPKQANGGAYQKPTKQEEFYA). The segment at 285-311 (GSYSLEEPKQANGGAYQKPTKQEEFYA) is disordered. Residue Ser286 is modified to Phosphoserine.

The protein belongs to the syndecan proteoglycan family. Interacts with CDCP1. Interacts (via C-terminus) with TIAM1 (via PDZ domain). Interacts with MDK. Shedding is enhanced by a number of factors such as heparanase, thrombin or EGF. Also by stress and wound healing. PMA-mediated shedding is inhibited by TIMP3.

Its subcellular location is the membrane. The protein localises to the secreted. It is found in the extracellular exosome. Its function is as follows. Cell surface proteoglycan that contains both heparan sulfate and chondroitin sulfate and that links the cytoskeleton to the interstitial matrix. Regulates exosome biogenesis in concert with SDCBP and PDCD6IP. Able to induce its own expression in dental mesenchymal cells and also in the neighboring dental epithelial cells via an MSX1-mediated pathway. The sequence is that of Syndecan-1 from Mus musculus (Mouse).